The chain runs to 626 residues: Chaperone protein HtpG (626 aa).

An a; substrate-binding region spans residues 1 to 341 (METKQFKAES…SEDLSLNISR (341 aa)). Residues 342–552 (EILQHDRQLK…EGELSIEMEK (211 aa)) are b. Residues 490 to 509 (DLGIEGEEKENTSSSDDKEN) form a disordered region. The span at 498–509 (KENTSSSDDKEN) shows a compositional bias: basic and acidic residues. The c stretch occupies residues 553 to 626 (VLNAMPNNQN…FTNNICKIMK (74 aa)).

The protein belongs to the heat shock protein 90 family. As to quaternary structure, homodimer.

The protein localises to the cytoplasm. Its function is as follows. Molecular chaperone. Has ATPase activity. The sequence is that of Chaperone protein HtpG from Clostridium botulinum (strain Loch Maree / Type A3).